A 272-amino-acid chain; its full sequence is D-aminoacyl-tRNA deacylase (272 aa).

Belongs to the DtdA deacylase family. Monomer. It depends on Zn(2+) as a cofactor.

It catalyses the reaction a D-aminoacyl-tRNA + H2O = a tRNA + a D-alpha-amino acid + H(+). It carries out the reaction glycyl-tRNA(Ala) + H2O = tRNA(Ala) + glycine + H(+). In terms of biological role, D-aminoacyl-tRNA deacylase with broad substrate specificity. By recycling D-aminoacyl-tRNA to D-amino acids and free tRNA molecules, this enzyme counteracts the toxicity associated with the formation of D-aminoacyl-tRNA entities in vivo. The chain is D-aminoacyl-tRNA deacylase from Thermococcus onnurineus (strain NA1).